We begin with the raw amino-acid sequence, 102 residues long: Small ribosomal subunit protein uS10 (102 aa).

This sequence belongs to the universal ribosomal protein uS10 family. Part of the 30S ribosomal subunit.

Its function is as follows. Involved in the binding of tRNA to the ribosomes. The sequence is that of Small ribosomal subunit protein uS10 from Cenarchaeum symbiosum (strain A).